Here is a 463-residue protein sequence, read N- to C-terminus: Glutamate--tRNA ligase (463 aa).

The 'HIGH' region signature appears at 10 to 20 (PSPTGHLHIGG). The 'KMSKS' region motif lies at 236 to 240 (KLSKR). Lys-239 is an ATP binding site.

It belongs to the class-I aminoacyl-tRNA synthetase family. Glutamate--tRNA ligase type 1 subfamily. In terms of assembly, monomer.

The protein localises to the cytoplasm. The catalysed reaction is tRNA(Glu) + L-glutamate + ATP = L-glutamyl-tRNA(Glu) + AMP + diphosphate. In terms of biological role, catalyzes the attachment of glutamate to tRNA(Glu) in a two-step reaction: glutamate is first activated by ATP to form Glu-AMP and then transferred to the acceptor end of tRNA(Glu). This Nitratidesulfovibrio vulgaris (strain ATCC 29579 / DSM 644 / CCUG 34227 / NCIMB 8303 / VKM B-1760 / Hildenborough) (Desulfovibrio vulgaris) protein is Glutamate--tRNA ligase.